A 144-amino-acid polypeptide reads, in one-letter code: Maximins 7/H1 (144 aa).

A signal peptide spans 1 to 18 (MNFKYIVAVSFLIASAYA). The propeptide occupies 19–43 (RSEENDEQSLSQRDVLEEESLREIR). Asn-70 bears the Asparagine amide mark. A propeptide spanning residues 74-123 (TAEDHEVMKRLEAVMRDLDSLDYPEEAAERETRGFNQEEIANLFTKKEKR) is cleaved from the precursor. Leu-143 carries the post-translational modification Leucine amide.

It belongs to the bombinin family. As to expression, expressed by the skin glands.

The protein localises to the secreted. Functionally, maximin-7 shows antimicrobial activity against bacteria and against the fungus C.albicans. It has little hemolytic activity. In terms of biological role, maximin-H1 shows antibacterial activity against both Gram-positive and Gram-negative bacteria. It also shows antimicrobial activity against the fungus C.albicans. Shows strong hemolytic activity. This is Maximins 7/H1 from Bombina maxima (Giant fire-bellied toad).